A 220-amino-acid chain; its full sequence is Mediator of RNA polymerase II transcription subunit 19 (220 aa).

The tract at residues 171–220 (AFDLDGTGKSQSGSNSGNNSKKRKNKSSGSSMATPTHSDSHEDMKRRRLE) is disordered. The segment covering 178-189 (GKSQSGSNSGNN) has biased composition (low complexity). Over residues 208–220 (SDSHEDMKRRRLE) the composition is skewed to basic and acidic residues.

It belongs to the Mediator complex subunit 19 family. Component of the Mediator complex, which is composed of at least 21 subunits that form three structurally distinct submodules. The Mediator head module contains MED6, MED8, MED11, SRB4/MED17, SRB5/MED18, ROX3/MED19, SRB2/MED20 and SRB6/MED22, the middle module contains MED1, MED4, NUT1/MED5, MED7, CSE2/MED9, NUT2/MED10, SRB7/MED21 and SOH1/MED31, and the tail module contains MED2, PGD1/MED3, RGR1/MED14, GAL11/MED15 and SIN4/MED16. The head and the middle modules interact directly with RNA polymerase II, whereas the elongated tail module interacts with gene-specific regulatory proteins.

Its subcellular location is the nucleus. Component of the Mediator complex, a coactivator involved in the regulated transcription of nearly all RNA polymerase II-dependent genes. Mediator functions as a bridge to convey information from gene-specific regulatory proteins to the basal RNA polymerase II transcription machinery. The Mediator complex, having a compact conformation in its free form, is recruited to promoters by direct interactions with regulatory proteins and serves for the assembly of a functional preinitiation complex with RNA polymerase II and the general transcription factors. The Mediator complex unfolds to an extended conformation and partially surrounds RNA polymerase II, specifically interacting with the unphosphorylated form of the C-terminal domain (CTD) of RNA polymerase II. The Mediator complex dissociates from the RNA polymerase II holoenzyme and stays at the promoter when transcriptional elongation begins. The polypeptide is Mediator of RNA polymerase II transcription subunit 19 (ROX3) (Saccharomyces cerevisiae (strain ATCC 204508 / S288c) (Baker's yeast)).